A 240-amino-acid chain; its full sequence is UDP-2,3-diacylglucosamine hydrolase (240 aa).

5 residues coordinate Mn(2+): Asp-9, His-11, Asp-43, Asn-81, and His-116. Residue 81–82 (NR) participates in substrate binding. Positions 124, 162, 166, 169, and 197 each coordinate substrate. The Mn(2+) site is built by His-197 and His-199.

This sequence belongs to the LpxH family. Requires Mn(2+) as cofactor.

It is found in the cell inner membrane. The catalysed reaction is UDP-2-N,3-O-bis[(3R)-3-hydroxytetradecanoyl]-alpha-D-glucosamine + H2O = 2-N,3-O-bis[(3R)-3-hydroxytetradecanoyl]-alpha-D-glucosaminyl 1-phosphate + UMP + 2 H(+). Its pathway is glycolipid biosynthesis; lipid IV(A) biosynthesis; lipid IV(A) from (3R)-3-hydroxytetradecanoyl-[acyl-carrier-protein] and UDP-N-acetyl-alpha-D-glucosamine: step 4/6. Hydrolyzes the pyrophosphate bond of UDP-2,3-diacylglucosamine to yield 2,3-diacylglucosamine 1-phosphate (lipid X) and UMP by catalyzing the attack of water at the alpha-P atom. Involved in the biosynthesis of lipid A, a phosphorylated glycolipid that anchors the lipopolysaccharide to the outer membrane of the cell. This chain is UDP-2,3-diacylglucosamine hydrolase, found in Neisseria meningitidis serogroup A / serotype 4A (strain DSM 15465 / Z2491).